We begin with the raw amino-acid sequence, 246 residues long: MATPQTGKKTPSRRVSELPDGPPDATGLTPRQQRVLAHIKDSIEKRGYPPSMREIGEAVGLTSSSSVAHQLKTLEEKGFLKRDPHRPRALEVFLPEVMAARRSMSAAEESSFDETGVGDALPAAQYVPVVGRIAAGGPILAEERVEDVFPLPRQLVGDGQLFLLEVRGDSMIEAAICDGDYVAIRQQPTAENGEIVAAMIDGEATVKTFQRKDGNVWLLPHNPAYDPIDGTHATILGKVTAVLRRV.

Residues Met1–Arg34 form a disordered region. A DNA-binding region (H-T-H motif) is located at residues Met52–Lys72. Catalysis depends on for autocatalytic cleavage activity residues Ser170 and Lys207.

Belongs to the peptidase S24 family. In terms of assembly, homodimer.

It catalyses the reaction Hydrolysis of Ala-|-Gly bond in repressor LexA.. In terms of biological role, represses a number of genes involved in the response to DNA damage (SOS response), including recA and lexA. In the presence of single-stranded DNA, RecA interacts with LexA causing an autocatalytic cleavage which disrupts the DNA-binding part of LexA, leading to derepression of the SOS regulon and eventually DNA repair. The protein is LexA repressor of Nocardioides sp. (strain ATCC BAA-499 / JS614).